We begin with the raw amino-acid sequence, 296 residues long: Carboxylesterase YbfK (296 aa).

Active-site charge relay system residues include Ser129, Glu244, and His273.

The protein belongs to the AB hydrolase superfamily.

Its subcellular location is the cytoplasm. The enzyme catalyses a carboxylic ester + H2O = an alcohol + a carboxylate + H(+). Shows carboxylesterase activity in vitro. In Bacillus subtilis (strain 168), this protein is Carboxylesterase YbfK (ybfK).